Reading from the N-terminus, the 382-residue chain is ORC1-type DNA replication protein 1 (382 aa).

ATP-binding positions include 63-67 (TGKTA), Tyr205, and Arg217.

Belongs to the CDC6/cdc18 family. In terms of assembly, monomer. Interacts with MCM via the WH domain. In terms of processing, autophosphorylated on a serine. Phosphorylation is stimulated by binding to MCM. Both single-stranded DNA and double-stranded DNA inhibit the phosphorylation reaction.

Functionally, involved in regulation of DNA replication. May play an essential role in origin recognition. Binds to DNA, with a preference for origin-specific double-stranded sequences. Does not bind single-stranded DNA. Inhibits MCM helicase activity but does not affect its oligomeric state. This chain is ORC1-type DNA replication protein 1 (cdc6-1), found in Methanothermobacter thermautotrophicus (strain ATCC 29096 / DSM 1053 / JCM 10044 / NBRC 100330 / Delta H) (Methanobacterium thermoautotrophicum).